The primary structure comprises 387 residues: Hydroxycarboxylic acid receptor 3 (387 aa).

Residues 1–28 (MNRHHLQDHFLEIDKKNCCVFRDDFIAK) lie on the Extracellular side of the membrane. A helical transmembrane segment spans residues 29 to 50 (VLPPVLGLEFIFGLLGNGLALW). Over 51–63 (IFCFHLKSWKSSR) the chain is Cytoplasmic. A helical transmembrane segment spans residues 64 to 85 (IFLFNLAVADFLLIICLPFVMD). Residues 86 to 102 (YYVRRSDWKFGDIPCRL) lie on the Extracellular side of the membrane. A disulfide bond links cysteine 100 and cysteine 177. A helical membrane pass occupies residues 103-123 (VLFMFAMNRQGSIIFLTVVAV). The Cytoplasmic segment spans residues 124-142 (DRYFRVVHPHHALNKISNW). Residues 143–163 (TAAIISCLLWGITVGLTVHLL) form a helical membrane-spanning segment. The Extracellular segment spans residues 164–194 (KKKLLIQNGTANVCISFSICHTFRWHEAMFL). Residues 195 to 209 (LEFFLPLGIILFCSA) form a helical membrane-spanning segment. The Cytoplasmic portion of the chain corresponds to 210-236 (RIIWSLRQRQMDRHAKIKRAITFIMVV). The chain crosses the membrane as a helical span at residues 237 to 256 (AIVFVICFLPSVVVRIHIFW). At 257–273 (LLHTSGTQNCEVYRSVD) the chain is on the extracellular side. The chain crosses the membrane as a helical span at residues 274–298 (LAFFITLSFTYMNSMLDPVVYYFSS). Topologically, residues 299–387 (PSFPNFFSTL…LEKQLGCCIE (89 aa)) are cytoplasmic. Positions 319–343 (GEPDNNRSTSVELTGDPNKTRGAPE) are disordered.

It belongs to the G-protein coupled receptor 1 family. In terms of tissue distribution, expression largely restricted to adipose tissue and spleen.

The protein resides in the cell membrane. Receptor for 3-OH-octanoid acid mediates a negative feedback regulation of adipocyte lipolysis to counteract prolipolytic influences under conditions of physiological or pathological increases in beta-oxidation rates. Acts as a low affinity receptor for nicotinic acid. This pharmacological effect requires nicotinic acid doses that are much higher than those provided by a normal diet. The polypeptide is Hydroxycarboxylic acid receptor 3 (HCAR3) (Homo sapiens (Human)).